Here is a 144-residue protein sequence, read N- to C-terminus: MLKGIHPALSPELLKTLAEMGHGDEIVLADAHFPAHSLHKNVIRADGISIDILLEAITPLFEFDAYVDAPLLMMKAVEGDSLDPNVETRYLNAIESAVGFTPNLTCLERFDFYTRAKQAYAVVVSGEIAKYGNIIIKKGVTPIL.

Histidine 22 (proton donor) is an active-site residue. Substrate is bound by residues aspartate 30, arginine 109, and 131–133 (YGN).

Belongs to the RbsD / FucU family. FucU mutarotase subfamily. In terms of assembly, homodecamer.

The protein resides in the cytoplasm. The catalysed reaction is alpha-L-fucose = beta-L-fucose. It functions in the pathway carbohydrate metabolism; L-fucose metabolism. Its function is as follows. Involved in the anomeric conversion of L-fucose. This Haemophilus influenzae (strain PittGG) protein is L-fucose mutarotase.